The primary structure comprises 149 residues: L-alanine exporter AlaE (149 aa).

4 helical membrane-spanning segments follow: residues 16-36 (FAMV…LSGM), 46-66 (LVAI…RDAI), 85-105 (VLAY…TVGA), and 112-132 (AAVS…GYFL).

It belongs to the AlaE exporter family.

The protein localises to the cell inner membrane. In terms of biological role, exports L-alanine. In Citrobacter koseri (strain ATCC BAA-895 / CDC 4225-83 / SGSC4696), this protein is L-alanine exporter AlaE.